Consider the following 66-residue polypeptide: Large ribosomal subunit protein bL35 (66 aa).

It belongs to the bacterial ribosomal protein bL35 family.

This is Large ribosomal subunit protein bL35 from Borrelia garinii subsp. bavariensis (strain ATCC BAA-2496 / DSM 23469 / PBi) (Borreliella bavariensis).